The primary structure comprises 248 residues: Small ribosomal subunit protein uS3 (248 aa).

Residues 38-106 (IREFLSEGLE…QVQLNILEVK (69 aa)) form the KH type-2 domain. The span at 214-229 (SLMNARDERPSRGGRR) shows a compositional bias: basic and acidic residues. A disordered region spans residues 214–248 (SLMNARDERPSRGGRRERPRRGGARRQRAEKKQEG). A compositionally biased stretch (basic residues) spans 230–242 (ERPRRGGARRQRA).

Belongs to the universal ribosomal protein uS3 family. Part of the 30S ribosomal subunit. Forms a tight complex with proteins S10 and S14.

Binds the lower part of the 30S subunit head. Binds mRNA in the 70S ribosome, positioning it for translation. This chain is Small ribosomal subunit protein uS3, found in Corynebacterium urealyticum (strain ATCC 43042 / DSM 7109).